The sequence spans 306 residues: Mitochondrial 2-oxoglutarate/malate carrier protein (306 aa).

3 Solcar repeats span residues 7–95 (VPNV…LLER), 103–194 (LSFG…AKQA), and 203–292 (DGIF…MNAA). The next 6 helical transmembrane spans lie at 9 to 38 (NVVK…NRMQ), 72 to 93 (SAGL…AFLL), 108 to 122 (KAVL…GSFV), 172 to 192 (PTVL…SQAK), 205 to 226 (IFCH…SMPV), and 268 to 286 (FTPY…FIIL).

It belongs to the mitochondrial carrier (TC 2.A.29) family. Interacts with ant-1.1 and ced-9. In terms of tissue distribution, ubiquitously expressed, but highly expressed in the anterior pharynx.

The protein resides in the mitochondrion. It is found in the mitochondrion inner membrane. The enzyme catalyses (S)-malate(in) + 2-oxoglutarate(out) = (S)-malate(out) + 2-oxoglutarate(in). It catalyses the reaction malonate(in) + 2-oxoglutarate(out) = malonate(out) + 2-oxoglutarate(in). It carries out the reaction succinate(in) + 2-oxoglutarate(out) = succinate(out) + 2-oxoglutarate(in). The catalysed reaction is maleate(in) + 2-oxoglutarate(out) = maleate(out) + 2-oxoglutarate(in). The enzyme catalyses oxaloacetate(in) + 2-oxoglutarate(out) = oxaloacetate(out) + 2-oxoglutarate(in). Catalyzes the transport of 2-oxoglutarate (alpha-oxoglutarate) across the inner mitochondrial membrane in an electroneutral exchange for malate. Can also exchange 2-oxoglutarate for other dicarboxylic acids such as malonate, succinate, maleate and oxaloacetate, although with lower affinity. Contributes to several metabolic processes, including the malate-aspartate shuttle, the oxoglutarate/isocitrate shuttle, in gluconeogenesis from lactate, and in nitrogen metabolism. Maintains mitochondrial fusion and fission events, and the organization and morphology of cristae. Regulator of apoptosis, insulin secretion and germline proliferation. Furthermore, plays a role in the oxidative stress response regulating endogenous levels of reactive oxygen species (ROS). Involved in the regulation of lin-35/Rb-mediated apoptosis in the germline. This Caenorhabditis elegans protein is Mitochondrial 2-oxoglutarate/malate carrier protein.